Reading from the N-terminus, the 227-residue chain is Small ribosomal subunit protein uS3 (227 aa).

Positions 24–94 (LDEYLEEELG…RVSIEVKELP (71 aa)) constitute a KH type-2 domain. A disordered region spans residues 207–227 (EEVEDELKELIGKSEDEAEGA).

This sequence belongs to the universal ribosomal protein uS3 family. As to quaternary structure, part of the 30S ribosomal subunit.

In terms of biological role, binds the lower part of the 30S subunit head. This Methanopyrus kandleri (strain AV19 / DSM 6324 / JCM 9639 / NBRC 100938) protein is Small ribosomal subunit protein uS3.